Here is a 196-residue protein sequence, read N- to C-terminus: Sulfur-rich protein (196 aa).

The next 3 membrane-spanning stretches (helical) occupy residues 34 to 54 (VTAG…LIGW), 76 to 96 (ITLL…MFIF), and 105 to 125 (FWLI…SLCF).

It localises to the membrane. In Chlamydia pneumoniae (Chlamydophila pneumoniae), this protein is Sulfur-rich protein (srp).